A 149-amino-acid polypeptide reads, in one-letter code: Calmodulin-1 (149 aa).

Alanine 2 is subject to N-acetylalanine. 4 EF-hand domains span residues 8 to 43 (EQIA…LGQN), 44 to 79 (PTEA…KMKD), 81 to 116 (DSEE…LGEK), and 117 to 149 (LTDE…MTSK). Residues aspartate 21, aspartate 23, aspartate 25, threonine 27, glutamate 32, aspartate 57, aspartate 59, asparagine 61, threonine 63, glutamate 68, aspartate 94, aspartate 96, asparagine 98, and glutamate 105 each coordinate Ca(2+). The residue at position 116 (lysine 116) is an N6,N6,N6-trimethyllysine. Aspartate 130, aspartate 132, aspartate 134, glutamine 136, and glutamate 141 together coordinate Ca(2+).

It belongs to the calmodulin family.

In terms of biological role, calmodulin mediates the control of a large number of enzymes, ion channels and other proteins by Ca(2+). Among the enzymes to be stimulated by the calmodulin-Ca(2+) complex are a number of protein kinases and phosphatases. This is Calmodulin-1 from Branchiostoma floridae (Florida lancelet).